Reading from the N-terminus, the 949-residue chain is Syndetin (949 aa).

The tract at residues 1–28 is disordered; sequence MQKIKSLMTRQGLRSPQESVHDLSPIEN. Residues 8-18 show a composition bias toward polar residues; sequence MTRQGLRSPQE. Coiled-coil stretches lie at residues 82–104 and 198–226; these read SLQE…LERV and YSCI…LSKI. The disordered stretch occupies residues 509–581; that stretch reads FEIQADSKDD…ETLRSRKKSD (73 aa). The span at 569–581 shows a compositional bias: basic and acidic residues; that stretch reads VSRETLRSRKKSD.

Belongs to the syndetin family. As to quaternary structure, component of the endosome-associated retrograde protein (EARP) complex.

Its subcellular location is the recycling endosome. It localises to the membrane. Functionally, acts as a component of the EARP complex that is involved in endocytic recycling. The EARP complex associates with Rab4-positive endosomes and promotes recycling of internalized transferrin receptor (TFRC) to the plasma membrane. This is Syndetin from Gallus gallus (Chicken).